A 110-amino-acid chain; its full sequence is UPF0122 protein BCA_3946 (110 aa).

It belongs to the UPF0122 family.

In terms of biological role, might take part in the signal recognition particle (SRP) pathway. This is inferred from the conservation of its genetic proximity to ftsY/ffh. May be a regulatory protein. This chain is UPF0122 protein BCA_3946, found in Bacillus cereus (strain 03BB102).